The sequence spans 45 residues: Putative potassium channel blocker (45 aa).

Expressed by the venom gland.

It is found in the secreted. In terms of biological role, inhibits potassium channels. This chain is Putative potassium channel blocker, found in Hottentotta tamulus (Eastern Indian scorpion).